Reading from the N-terminus, the 313-residue chain is Formate-nitrite transporter (313 aa).

Topologically, residues 1-47 (MPKSNTKYVIDPLSVKTSCSSEESYIRCVEYGKSKAHYSSLILLAKA) are cytoplasmic. The helical transmembrane segment at 48–68 (ILAGVFVGVCAHASGIAGGLF) threads the bilayer. Topologically, residues 69–77 (YYHKLREYV) are extracellular. Residues 78 to 98 (GASMSAFVYGFTFPIAFLCII) traverse the membrane as a helical segment. At 99-128 (CTGSDLFTGNTLAVTTALLHGKVSCLEYVR) the chain is on the cytoplasmic side. The helical transmembrane segment at 129 to 149 (VMCISLFGNYVGAVSFAFFVS) threads the bilayer. The Extracellular portion of the chain corresponds to 150 to 185 (YGSGAFHKKEQVDKNHIFQFLNDIAVKKVNHTFVEC). The N-linked (GlcNAc...) asparagine glycan is linked to Asn179. Residues 186-206 (ICLAIGCNIFVCLAVYFVLSI) traverse the membrane as a helical segment. The Cytoplasmic portion of the chain corresponds to 207–211 (KDGSG). The helical transmembrane segment at 212 to 232 (MVFSVFFAVYAFAIAGYEHII) threads the bilayer. Over 233–260 (ANIYTLNISLMIDTEVSFTQVYFKNLLP) the chain is Extracellular. An N-linked (GlcNAc...) asparagine glycan is attached at Asn239. The helical transmembrane segment at 261-281 (TLIGNYIAGALVLACPLFFIY) threads the bilayer. The Cytoplasmic portion of the chain corresponds to 282–313 (RSYYINYEKMNEPSGGSLRSISIEMKNDGGAT).

Belongs to the FNT transporter (TC 1.A.16) family. As to quaternary structure, homopentamer.

Its subcellular location is the cell membrane. It is found in the vacuole membrane. It carries out the reaction (S)-lactate(in) + H(+)(in) = (S)-lactate(out) + H(+)(out). The catalysed reaction is formate(in) + H(+)(in) = formate(out) + H(+)(out). The enzyme catalyses pyruvate(out) + H(+)(out) = pyruvate(in) + H(+)(in). It catalyses the reaction acetate(out) + H(+)(out) = acetate(in) + H(+)(in). With respect to regulation, inhibited by the Malaria Box compound MMV007839 and its derivatives BH296 and BH267.meta. Functionally, monocarboxylate-proton symporter that mediates the efflux of the waste product lactate in the intraerythrocytic parasites; active in acidic-to-neutral pH range. Transports L-lactate. This is Formate-nitrite transporter from Plasmodium ovale.